The chain runs to 84 residues: uncharacterized protein (84 aa).

2 stretches are compositionally biased toward basic residues: residues 1-15 (MPPH…HGHH) and 67-84 (HHGH…GHFF). Disordered stretches follow at residues 1-22 (MPPH…TYTT) and 64-84 (TSHH…GHFF).

This is an uncharacterized protein from Dictyostelium discoideum (Social amoeba).